The chain runs to 206 residues: HTH-type transcriptional regulator Hpr (206 aa).

The HTH marR-type domain maps to 13–157; the sequence is ALLFSQRMAQ…MMCIIRNIYG (145 aa). The H-T-H motif DNA-binding region spans 63–86; sequence ISEIAKFGVMHVSTAFNFSKKLEE. Residues 186 to 206 are disordered; that stretch reads SEELEDSADAAEKAAKANQIV.

In terms of assembly, homodimer.

Functionally, negative regulator of protease production and sporulation. The protein is HTH-type transcriptional regulator Hpr of Bacillus pumilus (strain SAFR-032).